A 181-amino-acid chain; its full sequence is MAADANNLIWIDLEMTGLEPDVDRVIEIATLVTDQELNIIGQGPVIAIHQSDDVLAAMDDWNQKHHGESGLIDRVRASQMNEAQAVAQTIAFLEQYVPKGASPMCGNSVGQDRRFLNRYMRELEDYFHYRNLDVSTVKELVKRWSPETMAGFKKQNTHQALQDIQESIAELQYYRSKVFKI.

Residues 8 to 171 (LIWIDLEMTG…QDIQESIAEL (164 aa)) enclose the Exonuclease domain. The active site involves Tyr129.

It belongs to the oligoribonuclease family.

It is found in the cytoplasm. Functionally, 3'-to-5' exoribonuclease specific for small oligoribonucleotides. In Shewanella sp. (strain ANA-3), this protein is Oligoribonuclease.